Here is a 166-residue protein sequence, read N- to C-terminus: Ribosomal RNA large subunit methyltransferase H (166 aa).

S-adenosyl-L-methionine-binding positions include Leu-85, Gly-116, and 135 to 140 (ISKMTF).

It belongs to the RNA methyltransferase RlmH family. Homodimer.

The protein resides in the cytoplasm. It catalyses the reaction pseudouridine(1915) in 23S rRNA + S-adenosyl-L-methionine = N(3)-methylpseudouridine(1915) in 23S rRNA + S-adenosyl-L-homocysteine + H(+). Its function is as follows. Specifically methylates the pseudouridine at position 1915 (m3Psi1915) in 23S rRNA. The sequence is that of Ribosomal RNA large subunit methyltransferase H from Francisella tularensis subsp. holarctica (strain FTNF002-00 / FTA).